The following is a 103-amino-acid chain: Methanol dehydrogenase [cytochrome c] subunit 2 (103 aa).

An N-terminal signal peptide occupies residues 1–20; sequence MKRILTLTVAALALGTPALA. The cysteines at positions 26 and 32 are disulfide-linked.

This sequence belongs to the methanol dehydrogenase subunit 2 family. Heterotetramer composed of 2 alpha and 2 beta subunits.

Its subcellular location is the periplasm. The enzyme catalyses 2 Fe(III)-[cytochrome cL] + a primary alcohol = 2 Fe(II)-[cytochrome cL] + an aldehyde + 2 H(+). Its function is as follows. Catalyzes the oxidation of primary alcohols including methanol. This Paracoccus denitrificans protein is Methanol dehydrogenase [cytochrome c] subunit 2 (moxI).